Consider the following 296-residue polypeptide: Sulfotransferase 1E1 (296 aa).

49–54 (KSGTTW) contributes to the 3'-phosphoadenylyl sulfate binding site. A substrate-binding site is contributed by 107–109 (KTH). The Proton acceptor role is filled by His109. 3'-phosphoadenylyl sulfate contacts are provided by residues Arg131, Ser139, Tyr194, 228 to 233 (TSFQEM), and 258 to 260 (RKG).

This sequence belongs to the sulfotransferase 1 family. As to quaternary structure, homodimer. In terms of processing, the N-terminus is blocked. Adrenal gland and much less in liver. Detectable only during pregnancy in uterine.

The protein resides in the cytoplasm. The protein localises to the cytosol. The catalysed reaction is estrone + 3'-phosphoadenylyl sulfate = estrone 3-sulfate + adenosine 3',5'-bisphosphate + H(+). It carries out the reaction (24S)-hydroxycholesterol + 3'-phosphoadenylyl sulfate = (24S)-hydroxycholesterol 3-sulfate + adenosine 3',5'-bisphosphate + H(+). The enzyme catalyses 17beta-estradiol + 3'-phosphoadenylyl sulfate = 17beta-estradiol 3-sulfate + adenosine 3',5'-bisphosphate + H(+). It catalyses the reaction 3beta-hydroxyandrost-5-en-17-one + 3'-phosphoadenylyl sulfate = dehydroepiandrosterone 3-sulfate + adenosine 3',5'-bisphosphate + H(+). The catalysed reaction is 4-ethylphenol + 3'-phosphoadenylyl sulfate = 4-ethylphenyl sulfate + adenosine 3',5'-bisphosphate + H(+). Its activity is regulated as follows. Inhibited by estradiol. Functionally, sulfotransferase that utilizes 3'-phospho-5'-adenylyl sulfate (PAPS) as sulfonate donor to catalyze the sulfate conjugation of estradiol and estrone. Is a key enzyme in estrogen homeostasis, the sulfation of estrogens leads to their inactivation. Also sulfates dehydroepiandrosterone (DHEA), pregnenolone, (24S)-hydroxycholesteroland xenobiotic compounds like ethinylestradiol, equalenin, diethyl stilbesterol and 1-naphthol at significantly lower efficiency. Does not sulfonate cortisol, testosterone and dopamine. May play a role in gut microbiota-host metabolic interaction. O-sulfonates 4-ethylphenol (4-EP), a dietary tyrosine-derived metabolite produced by gut bacteria. The product 4-EPS crosses the blood-brain barrier and may negatively regulate oligodendrocyte maturation and myelination, affecting the functional connectivity of different brain regions associated with the limbic system. This chain is Sulfotransferase 1E1 (SULT1E1), found in Cavia porcellus (Guinea pig).